Here is an 84-residue protein sequence, read N- to C-terminus: Exodeoxyribonuclease 7 small subunit (84 aa).

The protein belongs to the XseB family. As to quaternary structure, heterooligomer composed of large and small subunits.

It is found in the cytoplasm. The catalysed reaction is Exonucleolytic cleavage in either 5'- to 3'- or 3'- to 5'-direction to yield nucleoside 5'-phosphates.. Bidirectionally degrades single-stranded DNA into large acid-insoluble oligonucleotides, which are then degraded further into small acid-soluble oligonucleotides. The sequence is that of Exodeoxyribonuclease 7 small subunit from Herminiimonas arsenicoxydans.